Here is a 270-residue protein sequence, read N- to C-terminus: Tryptophan synthase alpha chain (270 aa).

Residues Glu49 and Asp60 each act as proton acceptor in the active site.

It belongs to the TrpA family. Tetramer of two alpha and two beta chains.

The enzyme catalyses (1S,2R)-1-C-(indol-3-yl)glycerol 3-phosphate + L-serine = D-glyceraldehyde 3-phosphate + L-tryptophan + H2O. Its pathway is amino-acid biosynthesis; L-tryptophan biosynthesis; L-tryptophan from chorismate: step 5/5. The alpha subunit is responsible for the aldol cleavage of indoleglycerol phosphate to indole and glyceraldehyde 3-phosphate. The polypeptide is Tryptophan synthase alpha chain (Marinobacter nauticus (strain ATCC 700491 / DSM 11845 / VT8) (Marinobacter aquaeolei)).